The chain runs to 235 residues: MTELARLKFYATQPHPCSYLPEEQATTLFLDPSQPMDTQLYASLSEVGFRRSGDHLYRPHCQHCTACIAARIPVAGFSPNRQQRRILKRNAELQVIRKRPSFNEEYYDLYRRYIEQRHADGDMYPPSRDQFATFLVRDLPFCCFFEFRLHGRLLAIAVTDVLPNGLSAVYTFYDPDEEQRSLGRYAILWQIAETERLGLQAVYLGYWIKNCRKMNYKTQYRPIELFVNQRWVALT.

It belongs to the R-transferase family. Bpt subfamily.

Its subcellular location is the cytoplasm. The enzyme catalyses N-terminal L-glutamyl-[protein] + L-leucyl-tRNA(Leu) = N-terminal L-leucyl-L-glutamyl-[protein] + tRNA(Leu) + H(+). The catalysed reaction is N-terminal L-aspartyl-[protein] + L-leucyl-tRNA(Leu) = N-terminal L-leucyl-L-aspartyl-[protein] + tRNA(Leu) + H(+). Functionally, functions in the N-end rule pathway of protein degradation where it conjugates Leu from its aminoacyl-tRNA to the N-termini of proteins containing an N-terminal aspartate or glutamate. In Pseudomonas paraeruginosa (strain DSM 24068 / PA7) (Pseudomonas aeruginosa (strain PA7)), this protein is Aspartate/glutamate leucyltransferase.